Reading from the N-terminus, the 328-residue chain is Alanine racemase (328 aa).

K33 serves as the catalytic Proton acceptor; specific for D-alanine. K33 is modified (N6-(pyridoxal phosphate)lysine). Residue R118 coordinates substrate. The Proton acceptor; specific for L-alanine role is filled by Y237. Residue M283 coordinates substrate.

Belongs to the alanine racemase family. Requires pyridoxal 5'-phosphate as cofactor.

The catalysed reaction is L-alanine = D-alanine. Its pathway is amino-acid biosynthesis; D-alanine biosynthesis; D-alanine from L-alanine: step 1/1. Functionally, catalyzes the interconversion of L-alanine and D-alanine. May also act on other amino acids. In Campylobacter jejuni subsp. doylei (strain ATCC BAA-1458 / RM4099 / 269.97), this protein is Alanine racemase (alr).